A 387-amino-acid chain; its full sequence is Chorismate synthase (387 aa).

NADP(+) is bound by residues Arg39 and Arg45. Residues 130–132, 251–252, Gly295, 310–314, and Arg336 each bind FMN; these read RSS, NA, and KPIPT.

It belongs to the chorismate synthase family. Homotetramer. FMNH2 serves as cofactor.

The enzyme catalyses 5-O-(1-carboxyvinyl)-3-phosphoshikimate = chorismate + phosphate. The protein operates within metabolic intermediate biosynthesis; chorismate biosynthesis; chorismate from D-erythrose 4-phosphate and phosphoenolpyruvate: step 7/7. In terms of biological role, catalyzes the anti-1,4-elimination of the C-3 phosphate and the C-6 proR hydrogen from 5-enolpyruvylshikimate-3-phosphate (EPSP) to yield chorismate, which is the branch point compound that serves as the starting substrate for the three terminal pathways of aromatic amino acid biosynthesis. This reaction introduces a second double bond into the aromatic ring system. The protein is Chorismate synthase of Exiguobacterium sp. (strain ATCC BAA-1283 / AT1b).